The following is a 348-amino-acid chain: tRNA pseudouridine synthase D (348 aa).

Substrate is bound at residue F26. D79 (nucleophile) is an active-site residue. N128 is a binding site for substrate. The TRUD domain occupies 154-302 (GVPNYFGSQR…VDPARRALLL (149 aa)). Residue F328 coordinates substrate.

The protein belongs to the pseudouridine synthase TruD family.

The enzyme catalyses uridine(13) in tRNA = pseudouridine(13) in tRNA. Responsible for synthesis of pseudouridine from uracil-13 in transfer RNAs. In Serratia proteamaculans (strain 568), this protein is tRNA pseudouridine synthase D.